The following is a 1241-amino-acid chain: High-affinity potassium transport protein (1241 aa).

Helical transmembrane passes span 49–70 (NFIA…ILLY) and 78–98 (IDAL…TVDV). Residue Asn100 is glycosylated (N-linked (GlcNAc...) asparagine). The helical transmembrane segment at 107–127 (IILYIICCISTPIAVHSCLAF) threads the bilayer. Disordered stretches follow at residues 162 to 241 (TART…SLDD), 253 to 316 (KYHG…TPED), and 329 to 570 (EGTA…QLQQ). Residues 164–177 (RTMTKSKTGGTQRV) are compositionally biased toward polar residues. 2 stretches are compositionally biased toward basic and acidic residues: residues 181 to 191 (GKSDKRDDFQE) and 199 to 214 (VNRD…HNSR). Low complexity predominate over residues 215–238 (DSNSNANTNSSNNNSINHNGSSGS). N-linked (GlcNAc...) asparagine glycosylation is found at Asn223, Asn227, Asn233, Asn257, Asn274, Asn353, and Asn364. 2 stretches are compositionally biased toward polar residues: residues 268–280 (NTAT…QKLK) and 345–365 (TDGT…TMNE). A compositionally biased stretch (basic and acidic residues) spans 366-375 (SKIRIQDKGA). A compositionally biased stretch (polar residues) spans 380-411 (DQDSVLHSSNSSACTSDEDSLPTNFGGTTPSL). N-linked (GlcNAc...) asparagine glycans are attached at residues Asn389 and Asn442. 2 stretches are compositionally biased toward basic residues: residues 446–455 (PPRKASKSKR) and 482–497 (HLPK…KRRL). Polar residues predominate over residues 498-509 (STGSIDKNSSSD). Asn505 and Asn538 each carry an N-linked (GlcNAc...) asparagine glycan. The segment covering 520-545 (NDDDDGNEGDNMEEYFADNESGDEDD) has biased composition (acidic residues). Residues 561–570 (KQQQQHQLQQ) are compositionally biased toward low complexity. N-linked (GlcNAc...) asparagine glycosylation is found at Asn584, Asn660, Asn681, Asn691, and Asn741. Residues 677–714 (NSHRNGSEDVSSDSNETTYPLNGNNDHSQNDANGYPTY) are disordered. A compositionally biased stretch (polar residues) spans 684–708 (EDVSSDSNETTYPLNGNNDHSQNDA). The next 5 membrane-spanning stretches (helical) occupy residues 784-806 (ILVV…WINL), 819-840 (VSPT…GLTL), 844-864 (SMMS…FIII), 868-888 (GFPI…PDLS), and 904-924 (CFTL…LVGL). Residue Asn925 is glycosylated (N-linked (GlcNAc...) asparagine). 2 consecutive transmembrane segments (helical) span residues 929 to 949 (WILF…SKGY) and 977 to 997 (SIQV…AISI). The segment at 1011–1073 (YGEMGGKPED…ENENPNEEST (63 aa)) is disordered. The segment covering 1021–1041 (TDTEEDGDCDDEDDDNEEEES) has biased composition (acidic residues). A compositionally biased stretch (basic residues) spans 1050 to 1062 (GKSKKETKKKKKR). The next 2 membrane-spanning stretches (helical) occupy residues 1084–1104 (QLSF…ICER) and 1117–1137 (VFTI…SLGY). N-linked (GlcNAc...) asparagine glycosylation is present at Asn1141. The tract at residues 1222–1241 (DELKHKRSLSRSSKRSTKTN) is disordered. Basic residues predominate over residues 1226–1241 (HKRSLSRSSKRSTKTN).

The protein belongs to the TrkH potassium transport family.

The protein resides in the membrane. Functionally, this protein is required for high-affinity potassium transport. The polypeptide is High-affinity potassium transport protein (TRK1) (Saccharomyces uvarum (Yeast)).